The sequence spans 252 residues: Imidazole glycerol phosphate synthase subunit HisF (252 aa).

Catalysis depends on residues Asp11 and Asp130.

It belongs to the HisA/HisF family. Heterodimer of HisH and HisF.

It is found in the cytoplasm. It carries out the reaction 5-[(5-phospho-1-deoxy-D-ribulos-1-ylimino)methylamino]-1-(5-phospho-beta-D-ribosyl)imidazole-4-carboxamide + L-glutamine = D-erythro-1-(imidazol-4-yl)glycerol 3-phosphate + 5-amino-1-(5-phospho-beta-D-ribosyl)imidazole-4-carboxamide + L-glutamate + H(+). It participates in amino-acid biosynthesis; L-histidine biosynthesis; L-histidine from 5-phospho-alpha-D-ribose 1-diphosphate: step 5/9. IGPS catalyzes the conversion of PRFAR and glutamine to IGP, AICAR and glutamate. The HisF subunit catalyzes the cyclization activity that produces IGP and AICAR from PRFAR using the ammonia provided by the HisH subunit. The sequence is that of Imidazole glycerol phosphate synthase subunit HisF from Streptococcus sanguinis (strain SK36).